The sequence spans 120 residues: MGVTFEFVYILVLLAISTGLSVILFFLGYFLMFKVAYEDKLMGYECGFDPFGNARGEFDIRFYLVAILFLIFDLEITFLFPFSVSIMSMTLLSYSLMLIFLIILTIGFIYEIKKGALDWS.

3 helical membrane passes run Phe7–Leu27, Phe62–Phe82, and Met89–Ile109.

This sequence belongs to the complex I subunit 3 family.

It localises to the mitochondrion membrane. The enzyme catalyses a ubiquinone + NADH + 5 H(+)(in) = a ubiquinol + NAD(+) + 4 H(+)(out). Functionally, core subunit of the mitochondrial membrane respiratory chain NADH dehydrogenase (Complex I) that is believed to belong to the minimal assembly required for catalysis. Complex I functions in the transfer of electrons from NADH to the respiratory chain. The immediate electron acceptor for the enzyme is believed to be ubiquinone. The protein is NADH-ubiquinone oxidoreductase chain 3 (nad3) of Dictyostelium discoideum (Social amoeba).